A 507-amino-acid polypeptide reads, in one-letter code: Kunitz-type protease inhibitor 1 (507 aa).

The signal sequence occupies residues 1–29 (MAGRRLARASISAVGVWLLCALGLQATEA). Residues 51 to 134 (GVPSFVLDTE…FAPKEGFINY (84 aa)) enclose the MANSC domain. N-linked (GlcNAc...) asparagine glycosylation occurs at N229. Residues 244-294 (CLASYKVGRCRGSFPRWYYDPKEQICKSFTFGGCLGNKNNYLREEECMLAC) enclose the BPTI/Kunitz inhibitor 1 domain. Cystine bridges form between C244-C294, C253-C277, C269-C290, C320-C338, C332-C347, C369-C419, C378-C402, and C394-C415. In terms of domain architecture, LDL-receptor class A spans 312–348 (SCHATQFRCSNGCCIDGFLECDDTPDCPDGSDEATCE). One can recognise a BPTI/Kunitz inhibitor 2 domain in the interval 369–419 (CAELPDTGFCKENIPRWYYNPFSERCARFTYGGCYGNKNNFEEEQQCLESC). The N-linked (GlcNAc...) asparagine glycan is linked to N501.

As to quaternary structure, interacts with HGFAC. Interacts with TMPRSS13; the interaction promotes the phosphorylation and cell membrane localization of TMPRSS13.

The protein resides in the secreted. Its subcellular location is the cytoplasm. It localises to the cell membrane. Its function is as follows. Inhibitor of HGFAC. Inhibits serine protease activity of ST14/matriptase in vitro. Inhibits serine protease activity of TMPRSS13, via the BPTI/Kunitz inhibitor 1 domain. The chain is Kunitz-type protease inhibitor 1 (Spint1) from Mus musculus (Mouse).